We begin with the raw amino-acid sequence, 327 residues long: Protein CONSERVED IN THE GREEN LINEAGE AND DIATOMS 27, chloroplastic (327 aa).

Residues 1 to 59 constitute a chloroplast transit peptide; sequence MLRLIVNYPLIPKISHRVCSNSSSKLGSYYDSSSIIKYGGISDVVGKKQELFLSVSVKA. The interval 66–88 is disordered; the sequence is NGGGSMSFSGQSWDPSSEIEVPS. 3 helical membrane passes run 119 to 139, 148 to 168, and 225 to 245; these read LGGL…AASF, FILA…LRIY, and LIGT…ATPV.

As to expression, mostly expressed in seeds, leaves and flowers, and, to a lower extent, in roots.

The protein localises to the membrane. It localises to the plastid. The protein resides in the chloroplast. In terms of biological role, required for growth in low iron conditions. The sequence is that of Protein CONSERVED IN THE GREEN LINEAGE AND DIATOMS 27, chloroplastic from Arabidopsis thaliana (Mouse-ear cress).